Here is a 358-residue protein sequence, read N- to C-terminus: Phospho-N-acetylmuramoyl-pentapeptide-transferase (358 aa).

Transmembrane regions (helical) follow at residues 26–46, 70–90, 94–114, 134–154, 169–189, 197–217, 234–254, 261–281, 286–306, and 335–355; these read AIYATITALMIAFILGPWLID, GTPTMGGTLILLAIVLPTLLW, TNVYVWVTLLVTVGFGAVGFV, MLWLMLIAGTAGVMLYSYPPF, ELGLFYIPFAVLVIVGASNAV, GLAIGPTIIASGTYLLFAYLA, AGELAVLCGAMVGAGLGFLWF, VFMGDVGSLSLGGALGTIAVI, IVLVIVGGIFVVEALSVIVQV, and KIIVRFWIISIILALVALSTL.

It belongs to the glycosyltransferase 4 family. MraY subfamily. Mg(2+) is required as a cofactor.

The protein localises to the cell inner membrane. It catalyses the reaction UDP-N-acetyl-alpha-D-muramoyl-L-alanyl-gamma-D-glutamyl-meso-2,6-diaminopimeloyl-D-alanyl-D-alanine + di-trans,octa-cis-undecaprenyl phosphate = di-trans,octa-cis-undecaprenyl diphospho-N-acetyl-alpha-D-muramoyl-L-alanyl-D-glutamyl-meso-2,6-diaminopimeloyl-D-alanyl-D-alanine + UMP. It functions in the pathway cell wall biogenesis; peptidoglycan biosynthesis. In terms of biological role, catalyzes the initial step of the lipid cycle reactions in the biosynthesis of the cell wall peptidoglycan: transfers peptidoglycan precursor phospho-MurNAc-pentapeptide from UDP-MurNAc-pentapeptide onto the lipid carrier undecaprenyl phosphate, yielding undecaprenyl-pyrophosphoryl-MurNAc-pentapeptide, known as lipid I. The protein is Phospho-N-acetylmuramoyl-pentapeptide-transferase of Syntrophotalea carbinolica (strain DSM 2380 / NBRC 103641 / GraBd1) (Pelobacter carbinolicus).